We begin with the raw amino-acid sequence, 221 residues long: 7-cyano-7-deazaguanine synthase (221 aa).

10–20 (FSGGQDSTTCL) provides a ligand contact to ATP. Zn(2+) contacts are provided by cysteine 186, cysteine 195, cysteine 198, and cysteine 201.

It belongs to the QueC family. Homodimer. It depends on Zn(2+) as a cofactor.

The enzyme catalyses 7-carboxy-7-deazaguanine + NH4(+) + ATP = 7-cyano-7-deazaguanine + ADP + phosphate + H2O + H(+). The protein operates within purine metabolism; 7-cyano-7-deazaguanine biosynthesis. In terms of biological role, catalyzes the ATP-dependent conversion of 7-carboxy-7-deazaguanine (CDG) to 7-cyano-7-deazaguanine (preQ(0)). The sequence is that of 7-cyano-7-deazaguanine synthase from Geobacillus thermodenitrificans (strain NG80-2).